The sequence spans 214 residues: Outer-membrane lipoprotein LolB (214 aa).

The first 30 residues, 1–30, serve as a signal peptide directing secretion; the sequence is MKHVSSPHPCAAIASARVWLGLVLVALLAG. Cysteine 31 is lipidated: N-palmitoyl cysteine. The S-diacylglycerol cysteine moiety is linked to residue cysteine 31.

This sequence belongs to the LolB family. In terms of assembly, monomer.

It is found in the cell outer membrane. Its function is as follows. Plays a critical role in the incorporation of lipoproteins in the outer membrane after they are released by the LolA protein. This is Outer-membrane lipoprotein LolB from Chromohalobacter salexigens (strain ATCC BAA-138 / DSM 3043 / CIP 106854 / NCIMB 13768 / 1H11).